The chain runs to 119 residues: PFDIPEPYVWDESFRVFYDNLDDEHKGLFKGVFNCAADMSSAGNLKHLIDVTTTHFRNEEAMMDAAKYENVVPHKQMHKDFLAKLGGLKAPLDQGTIDYAKDWLVQHIKTTDFKYKGKL.

Residues histidine 25, histidine 55, asparagine 58, glutamate 59, histidine 74, histidine 78, histidine 107, and aspartate 112 each contribute to the Fe cation site.

This sequence belongs to the hemerythrin family. As to quaternary structure, monomer. As to expression, muscle.

Myohemerythrin is an oxygen-binding protein found in the retractor muscles of certain worms. The oxygen-binding site contains two iron atoms. This is Myohemerythrin-1 from Phascolopsis gouldii (Peanut worm).